Consider the following 198-residue polypeptide: Ribonuclease HII (198 aa).

The RNase H type-2 domain maps to 10 to 198 (HLVAGVDEVG…PVKRALELAS (189 aa)). The a divalent metal cation site is built by D16, E17, and D108.

The protein belongs to the RNase HII family. The cofactor is Mn(2+). Mg(2+) is required as a cofactor.

Its subcellular location is the cytoplasm. The catalysed reaction is Endonucleolytic cleavage to 5'-phosphomonoester.. In terms of biological role, endonuclease that specifically degrades the RNA of RNA-DNA hybrids. The protein is Ribonuclease HII of Salmonella arizonae (strain ATCC BAA-731 / CDC346-86 / RSK2980).